The sequence spans 568 residues: Tetratricopeptide repeat protein 22 (568 aa).

TPR repeat units lie at residues 66–99 (PAVR…DPGN), 101–133 (NAWA…MGLE), 155–190 (YAHG…GQQI), 203–237 (ATLF…LGEV), 260–294 (KDTF…AKNQ), 296–328 (PILN…LTDP), and 432–465 (PELQ…DDEG).

In Mus musculus (Mouse), this protein is Tetratricopeptide repeat protein 22 (Ttc22).